Consider the following 151-residue polypeptide: uncharacterized protein (151 aa).

Positions 24, 27, 92, and 129 each coordinate [4Fe-4S] cluster.

This sequence belongs to the complex I 20 kDa subunit family. [4Fe-4S] cluster is required as a cofactor.

This is an uncharacterized protein from Methanocaldococcus jannaschii (strain ATCC 43067 / DSM 2661 / JAL-1 / JCM 10045 / NBRC 100440) (Methanococcus jannaschii).